The following is a 462-amino-acid chain: Myo-inositol transporter 3B (462 aa).

Transmembrane regions (helical) follow at residues 1–21 (MAIL…ASSY), 31–51 (IILG…ITET), 61–81 (IGVN…IGAG), 91–111 (LLFA…HYLP), 194–214 (LCGF…LGLS), 218–238 (LGGL…MSLV), 245–265 (GLML…IIGF), 289–309 (VVIG…SHLV), 324–344 (GSGV…VSYL), and 354–374 (GTYG…VFCF).

This sequence belongs to the major facilitator superfamily. Sugar transporter (TC 2.A.1.1) family.

Its subcellular location is the cell membrane. The catalysed reaction is myo-inositol(out) + H(+)(out) = myo-inositol(in) + H(+)(in). In terms of biological role, transporter for myo-inositol. In Cryptococcus neoformans var. grubii serotype A (strain H99 / ATCC 208821 / CBS 10515 / FGSC 9487) (Filobasidiella neoformans var. grubii), this protein is Myo-inositol transporter 3B.